Reading from the N-terminus, the 290-residue chain is MAKGKELKGRIRSTENTRKITRTMEMVATSKLKRATDRVAAARPYALALGEVLSHVYSPELADRFPLLRRPAAPRTVALVILTANRGLCGAFNANLIKEARSRIAELEAKGLTVELHVVGRKGVGFFRYVNRAIASQRTDITDKPSAADAASLIDGLMQRFAAGSIDAVYITYAKYLSALSAPPATEQVLPVAPPTAKAEGGVQHDFILAPSADAILEALLPLYVRNAVYRALVETEAGFQSAQRTAMKNATDNATELLQVLKRTYNSARQAQITQEIAEIVGGASALQG.

Belongs to the ATPase gamma chain family. In terms of assembly, F-type ATPases have 2 components, CF(1) - the catalytic core - and CF(0) - the membrane proton channel. CF(1) has five subunits: alpha(3), beta(3), gamma(1), delta(1), epsilon(1). CF(0) has three main subunits: a, b and c.

The protein resides in the cell inner membrane. In terms of biological role, produces ATP from ADP in the presence of a proton gradient across the membrane. The gamma chain is believed to be important in regulating ATPase activity and the flow of protons through the CF(0) complex. The protein is ATP synthase gamma chain of Gemmatimonas aurantiaca (strain DSM 14586 / JCM 11422 / NBRC 100505 / T-27).